A 198-amino-acid polypeptide reads, in one-letter code: Recombination protein RecR (198 aa).

The C4-type zinc finger occupies 56 to 71 (CKVCGNFSEEDECVIC). The Toprim domain occupies 79 to 174 (GVICVVEEPK…RVSKLASGLP (96 aa)).

The protein belongs to the RecR family.

May play a role in DNA repair. It seems to be involved in an RecBC-independent recombinational process of DNA repair. It may act with RecF and RecO. The chain is Recombination protein RecR from Tropheryma whipplei (strain TW08/27) (Whipple's bacillus).